The chain runs to 244 residues: Small ribosomal subunit protein uS3 (244 aa).

The 69-residue stretch at 39-107 (VREMLRKKLA…PAHINVTEVR (69 aa)) folds into the KH type-2 domain. Residues 213–244 (VGQEKQDDSPRNDRNDRGDRGDRPSRPAREAR) are disordered. The span at 216–244 (EKQDDSPRNDRNDRGDRGDRPSRPAREAR) shows a compositional bias: basic and acidic residues.

Belongs to the universal ribosomal protein uS3 family. In terms of assembly, part of the 30S ribosomal subunit. Forms a tight complex with proteins S10 and S14.

In terms of biological role, binds the lower part of the 30S subunit head. Binds mRNA in the 70S ribosome, positioning it for translation. The sequence is that of Small ribosomal subunit protein uS3 from Xanthomonas campestris pv. campestris (strain 8004).